The chain runs to 101 residues: Large ribosomal subunit protein uL23 (101 aa).

It belongs to the universal ribosomal protein uL23 family. As to quaternary structure, part of the 50S ribosomal subunit. Contacts protein L29, and trigger factor when it is bound to the ribosome.

One of the early assembly proteins it binds 23S rRNA. One of the proteins that surrounds the polypeptide exit tunnel on the outside of the ribosome. Forms the main docking site for trigger factor binding to the ribosome. The sequence is that of Large ribosomal subunit protein uL23 from Aromatoleum aromaticum (strain DSM 19018 / LMG 30748 / EbN1) (Azoarcus sp. (strain EbN1)).